A 733-amino-acid polypeptide reads, in one-letter code: Tyrosine-protein kinase ptk (733 aa).

2 consecutive transmembrane segments (helical) span residues 19–39 (LFFSLIAQWKLIALCIILSLI) and 438–458 (LQILILSIFLGGFLGTLLALL). 542–550 (GPAPEVGKS) contacts ATP.

This sequence belongs to the etk/wzc family. It depends on Mg(2+) as a cofactor. Requires Mn(2+) as cofactor. Post-translationally, autophosphorylated on several Tyr residues. Dephosphorylated by ptp.

It localises to the cell inner membrane. The enzyme catalyses L-tyrosyl-[protein] + ATP = O-phospho-L-tyrosyl-[protein] + ADP + H(+). The protein operates within glycan metabolism; exopolysaccharide biosynthesis. Functionally, may be involved in the production and the transport of exopolysaccharides. In Acinetobacter johnsonii, this protein is Tyrosine-protein kinase ptk (ptk).